Consider the following 163-residue polypeptide: Succinate dehydrogenase assembly factor 2, mitochondrial (163 aa).

It belongs to the SDHAF2 family. As to quaternary structure, interacts with the flavoprotein subunit within the SDH catalytic dimer.

It is found in the mitochondrion matrix. Functionally, plays an essential role in the assembly of succinate dehydrogenase (SDH), an enzyme complex (also referred to as respiratory complex II) that is a component of both the tricarboxylic acid (TCA) cycle and the mitochondrial electron transport chain, and which couples the oxidation of succinate to fumarate with the reduction of ubiquinone (coenzyme Q) to ubiquinol. Required for flavinylation (covalent attachment of FAD) of the flavoprotein subunit of the SDH catalytic dimer. This chain is Succinate dehydrogenase assembly factor 2, mitochondrial, found in Kluyveromyces lactis (strain ATCC 8585 / CBS 2359 / DSM 70799 / NBRC 1267 / NRRL Y-1140 / WM37) (Yeast).